The primary structure comprises 377 residues: Carbamoyl phosphate synthase small chain (377 aa).

A CPSase region spans residues 1–186; that stretch reads MSTPALLVLA…LGKGFVTPDE (186 aa). Positions 47, 238, and 240 each coordinate L-glutamine. The Glutamine amidotransferase type-1 domain maps to 190-377; it reads HVVAYDFGVK…IGNMKAAKRA (188 aa). The active-site Nucleophile is the Cys266. Leu267, Gln270, Asn308, Gly310, and Phe311 together coordinate L-glutamine. Residues His350 and Glu352 contribute to the active site.

The protein belongs to the CarA family. In terms of assembly, composed of two chains; the small (or glutamine) chain promotes the hydrolysis of glutamine to ammonia, which is used by the large (or ammonia) chain to synthesize carbamoyl phosphate. Tetramer of heterodimers (alpha,beta)4.

It catalyses the reaction hydrogencarbonate + L-glutamine + 2 ATP + H2O = carbamoyl phosphate + L-glutamate + 2 ADP + phosphate + 2 H(+). The catalysed reaction is L-glutamine + H2O = L-glutamate + NH4(+). It participates in amino-acid biosynthesis; L-arginine biosynthesis; carbamoyl phosphate from bicarbonate: step 1/1. It functions in the pathway pyrimidine metabolism; UMP biosynthesis via de novo pathway; (S)-dihydroorotate from bicarbonate: step 1/3. Small subunit of the glutamine-dependent carbamoyl phosphate synthetase (CPSase). CPSase catalyzes the formation of carbamoyl phosphate from the ammonia moiety of glutamine, carbonate, and phosphate donated by ATP, constituting the first step of 2 biosynthetic pathways, one leading to arginine and/or urea and the other to pyrimidine nucleotides. The small subunit (glutamine amidotransferase) binds and cleaves glutamine to supply the large subunit with the substrate ammonia. The polypeptide is Carbamoyl phosphate synthase small chain (Neisseria meningitidis serogroup A / serotype 4A (strain DSM 15465 / Z2491)).